A 409-amino-acid polypeptide reads, in one-letter code: Peptidase T (409 aa).

Residue histidine 78 participates in Zn(2+) binding. Aspartate 80 is an active-site residue. Zn(2+) is bound at residue aspartate 139. The active-site Proton acceptor is the glutamate 173. 3 residues coordinate Zn(2+): glutamate 174, aspartate 196, and histidine 378.

It belongs to the peptidase M20B family. Zn(2+) is required as a cofactor.

It localises to the cytoplasm. The enzyme catalyses Release of the N-terminal residue from a tripeptide.. Cleaves the N-terminal amino acid of tripeptides. The protein is Peptidase T of Shewanella sediminis (strain HAW-EB3).